A 237-amino-acid chain; its full sequence is Phosphoribosylaminoimidazole-succinocarboxamide synthase (237 aa).

This sequence belongs to the SAICAR synthetase family.

The catalysed reaction is 5-amino-1-(5-phospho-D-ribosyl)imidazole-4-carboxylate + L-aspartate + ATP = (2S)-2-[5-amino-1-(5-phospho-beta-D-ribosyl)imidazole-4-carboxamido]succinate + ADP + phosphate + 2 H(+). Its pathway is purine metabolism; IMP biosynthesis via de novo pathway; 5-amino-1-(5-phospho-D-ribosyl)imidazole-4-carboxamide from 5-amino-1-(5-phospho-D-ribosyl)imidazole-4-carboxylate: step 1/2. The chain is Phosphoribosylaminoimidazole-succinocarboxamide synthase from Sodalis glossinidius (strain morsitans).